Here is a 679-residue protein sequence, read N- to C-terminus: UvrABC system protein B (679 aa).

The 384-residue stretch at 31–414 folds into the Helicase ATP-binding domain; the sequence is ENLTDGLAHQ…ELEKSGTEII (384 aa). Position 44 to 51 (44 to 51) interacts with ATP; that stretch reads GVTGSGKT. The short motif at 97–120 is the Beta-hairpin element; it reads YYDYYQPEAYVPSSDTFIEKDASI. In terms of domain architecture, Helicase C-terminal spans 436-589; the sequence is QVDDLLSEAR…QIKYNEEHGI (154 aa). A UVR domain is found at 639–674; it reads QQQIKKLEQQMYKFAQDLEFEKAAAIRDQLHQLREQ.

This sequence belongs to the UvrB family. As to quaternary structure, forms a heterotetramer with UvrA during the search for lesions. Interacts with UvrC in an incision complex.

The protein resides in the cytoplasm. Functionally, the UvrABC repair system catalyzes the recognition and processing of DNA lesions. A damage recognition complex composed of 2 UvrA and 2 UvrB subunits scans DNA for abnormalities. Upon binding of the UvrA(2)B(2) complex to a putative damaged site, the DNA wraps around one UvrB monomer. DNA wrap is dependent on ATP binding by UvrB and probably causes local melting of the DNA helix, facilitating insertion of UvrB beta-hairpin between the DNA strands. Then UvrB probes one DNA strand for the presence of a lesion. If a lesion is found the UvrA subunits dissociate and the UvrB-DNA preincision complex is formed. This complex is subsequently bound by UvrC and the second UvrB is released. If no lesion is found, the DNA wraps around the other UvrB subunit that will check the other stand for damage. The chain is UvrABC system protein B from Haemophilus influenzae (strain 86-028NP).